Here is a 186-residue protein sequence, read N- to C-terminus: Oligoribonuclease (186 aa).

One can recognise an Exonuclease domain in the interval 12 to 175 (LIWIDLEMTG…DDIKDSIKEL (164 aa)). Tyrosine 133 is a catalytic residue.

This sequence belongs to the oligoribonuclease family.

It is found in the cytoplasm. Functionally, 3'-to-5' exoribonuclease specific for small oligoribonucleotides. This is Oligoribonuclease from Wigglesworthia glossinidia brevipalpis.